The following is a 301-amino-acid chain: Putative F-box/LRR-repeat protein 19 (301 aa).

The F-box domain maps to 18–66; the sequence is PDWSELTRECLLDIFSRLSQEQRWIGPMLVSKNWMNACYDPTLNTIFDL. 5 LRR repeats span residues 108 to 133, 134 to 159, 160 to 185, 231 to 256, and 257 to 282; these read IRHCTERSLSYAAERCPNLEVLWIKN, CPNVTDASMEKIAMNCPNLRELDISY, SYGITHESLITLGRSCQNLKILKRNL, YSTLTARGLDSVCKGCSNLEYMDLRG, and CISLTRSDINTNTSGLKNLTEIIKPD.

The chain is Putative F-box/LRR-repeat protein 19 (FBL19) from Arabidopsis thaliana (Mouse-ear cress).